Reading from the N-terminus, the 277-residue chain is Large ribosomal subunit protein uL2 (277 aa).

Residues 222-277 (GVAMNPVDHPHGGGEGRTSGGRHPVTPWGKPTKGKKTRSNKATDKFIMRSRHQRKK) are disordered.

It belongs to the universal ribosomal protein uL2 family. In terms of assembly, part of the 50S ribosomal subunit. Forms a bridge to the 30S subunit in the 70S ribosome.

One of the primary rRNA binding proteins. Required for association of the 30S and 50S subunits to form the 70S ribosome, for tRNA binding and peptide bond formation. It has been suggested to have peptidyltransferase activity; this is somewhat controversial. Makes several contacts with the 16S rRNA in the 70S ribosome. This is Large ribosomal subunit protein uL2 from Brucella canis (strain ATCC 23365 / NCTC 10854 / RM-666).